A 284-amino-acid chain; its full sequence is Tropomyosin alpha-1 chain (284 aa).

Residues 1 to 40 are disordered; that stretch reads MDAIKKKMQMLKLDKENALDRAEQAEADKKGAEDKSKQLE. A coiled-coil region spans residues 1 to 284; that stretch reads MDAIKKKMQM…DHALNDMTSI (284 aa). Over residues 12–40 the composition is skewed to basic and acidic residues; the sequence is KLDKENALDRAEQAEADKKGAEDKSKQLE.

This sequence belongs to the tropomyosin family. In terms of assembly, homodimer. Heterodimer of an alpha (TPM1, TPM3 or TPM4) and a beta (TPM2) chain.

It localises to the cytoplasm. The protein localises to the cytoskeleton. In terms of biological role, binds to actin filaments in muscle and non-muscle cells. Plays a central role, in association with the troponin complex, in the calcium dependent regulation of vertebrate striated muscle contraction. Smooth muscle contraction is regulated by interaction with caldesmon. In non-muscle cells is implicated in stabilizing cytoskeleton actin filaments. The sequence is that of Tropomyosin alpha-1 chain (tpm1) from Rana temporaria (European common frog).